The following is a 514-amino-acid chain: Na(+)/H(+) antiporter NhaB (514 aa).

Helical transmembrane passes span 21 to 41 (LAIV…SPFI), 43 to 63 (GWLL…CYPL), 88 to 108 (IMAN…IFFM), 143 to 163 (FLDA…FYGV), 203 to 223 (LMMH…VGEP), 239 to 259 (FFLR…LTCF), 304 to 324 (ALIA…VGLI), 349 to 369 (QESL…AVII), 390 to 410 (LALF…VFVA), 448 to 468 (ATPN…SPLI), and 484 to 504 (IVLS…ATIW).

The protein belongs to the NhaB Na(+)/H(+) (TC 2.A.34) antiporter family.

It is found in the cell inner membrane. It carries out the reaction 2 Na(+)(in) + 3 H(+)(out) = 2 Na(+)(out) + 3 H(+)(in). Its function is as follows. Na(+)/H(+) antiporter that extrudes sodium in exchange for external protons. The protein is Na(+)/H(+) antiporter NhaB of Haemophilus influenzae (strain 86-028NP).